Here is a 714-residue protein sequence, read N- to C-terminus: Epithelial splicing regulatory protein 1 (714 aa).

RRM domains are found at residues 225–302 (TVIR…KATG), 326–406 (IIVR…KSTA), and 450–530 (DCVR…ACSA).

It belongs to the ESRP family.

The protein localises to the nucleus. Functionally, mRNA splicing factor that regulates the formation of epithelial cell-specific isoforms. Specifically regulates the expression of FGFR2-IIIb, an epithelial cell-specific isoform of fgfr2. Acts by directly binding specific sequences in mRNAs. Binds the GU-rich sequence motifs in the ISE/ISS-3, a cis-element regulatory region present in the mRNA of fgfr2. This chain is Epithelial splicing regulatory protein 1 (esrp1), found in Danio rerio (Zebrafish).